The primary structure comprises 1203 residues: DNA-directed RNA polymerase subunit beta' (1203 aa).

Positions 60, 62, 75, and 78 each coordinate Zn(2+). Positions 449, 451, and 453 each coordinate Mg(2+). Positions 818, 892, 899, and 902 each coordinate Zn(2+). Residues 1180–1203 (RNLESGLDMPESAEESSEEETQTV) are disordered. The span at 1190-1203 (ESAEESSEEETQTV) shows a compositional bias: acidic residues.

The protein belongs to the RNA polymerase beta' chain family. In terms of assembly, the RNAP catalytic core consists of 2 alpha, 1 beta, 1 beta' and 1 omega subunit. When a sigma factor is associated with the core the holoenzyme is formed, which can initiate transcription. Mg(2+) is required as a cofactor. Zn(2+) serves as cofactor.

It catalyses the reaction RNA(n) + a ribonucleoside 5'-triphosphate = RNA(n+1) + diphosphate. Its function is as follows. DNA-dependent RNA polymerase catalyzes the transcription of DNA into RNA using the four ribonucleoside triphosphates as substrates. The sequence is that of DNA-directed RNA polymerase subunit beta' from Oceanobacillus iheyensis (strain DSM 14371 / CIP 107618 / JCM 11309 / KCTC 3954 / HTE831).